Here is a 964-residue protein sequence, read N- to C-terminus: A-type ATP synthase subunit A (964 aa).

The DOD-type homing endonuclease domain occupies 392-518 (FLGYLMANGT…LSYLFAKLGI (127 aa)).

The protein belongs to the ATPase alpha/beta chains family. Has multiple subunits with at least A(3), B(3), C, D, E, F, H, I and proteolipid K(x). In terms of processing, this protein undergoes a protein self splicing that involves a post-translational excision of the VDE intervening region (intein) followed by peptide ligation.

It is found in the cell membrane. It catalyses the reaction ATP + H2O + 4 H(+)(in) = ADP + phosphate + 5 H(+)(out). Its function is as follows. Component of the A-type ATP synthase that produces ATP from ADP in the presence of a proton gradient across the membrane. The A chain is the catalytic subunit. This is A-type ATP synthase subunit A from Pyrococcus horikoshii (strain ATCC 700860 / DSM 12428 / JCM 9974 / NBRC 100139 / OT-3).